Here is a 451-residue protein sequence, read N- to C-terminus: Magnesium transporter MgtE (451 aa).

At 1-285 (MVQNMTYDEL…TKAYVAAYRR (285 aa)) the chain is on the cytoplasmic side. Mg(2+) is bound by residues Asp-64 and Asp-96. CBS domains are found at residues 140–203 (MTNR…VQDL) and 204–260 (MFTR…EADE). Mg(2+)-binding residues include Glu-218, Asp-228, Asp-249, Asp-252, Glu-257, Glu-260, and Asp-261. A helical transmembrane segment spans residues 286 to 306 (LPWLILLLFIGLISGSIISYF). The Extracellular portion of the chain corresponds to 307–311 (EDALK). Residues 312-332 (QVVALAFFMPMVSGMTGNTGT) traverse the membrane as a helical segment. At 333–371 (QSLAVVIRGLSKEEMNKKTIVRLIFREFRTSIFIGAVCS) the chain is on the cytoplasmic side. The next 2 helical transmembrane spans lie at 372–392 (VLIA…FVVA) and 393–413 (SSLF…PIIL). Over 414-427 (HKLKVDPAIASGPL) the chain is Cytoplasmic. Mg(2+)-binding residues include Asp-419 and Asp-433. A helical transmembrane segment spans residues 428–448 (ITTLNDILSLLIYFGIATAFI). At 449–451 (HSL) the chain is on the extracellular side.

Belongs to the SLC41A transporter family. As to quaternary structure, homodimer.

The protein resides in the cell membrane. The catalysed reaction is Mg(2+)(in) = Mg(2+)(out). Its activity is regulated as follows. Binds cyclic di-AMP (c-di-AMP), which may regulate the transporter activity. Its function is as follows. Acts as a magnesium transporter. MgtE is the dominant transporter under rich-medium growth conditions, and it may provide the primary route of magnesium import in B.subtilis, while the other putative transport proteins are likely to be utilized for more-specialized growth conditions. The polypeptide is Magnesium transporter MgtE (Bacillus subtilis (strain 168)).